A 640-amino-acid chain; its full sequence is Preterminal protein (640 aa).

Residues 232–257 (PSQEGEGEERENPDRASSRPRPQETV) form a disordered region. The Nuclear localization signal motif lies at 351–360 (RLPVRRRRRR). The residue at position 549 (Ser549) is an O-(5'-phospho-DNA)-serine. Residues 614–640 (GADVPLPAMPPGPEPPLPPGARPRHRF) form a disordered region. Residues 620 to 634 (PAMPPGPEPPLPPGA) show a composition bias toward pro residues.

Belongs to the adenoviridae terminal protein family. As to quaternary structure, heterodimer with the polymerase; this heterodimer binds to bp 9 to 18 of the genome. Interacts with host POU2F1; POU2F1 binds to the auxiliary sequences in the inverted terminal repeats and tethers the pTP-POL heterodimer to the origin DNA thereby participating in the assembly of the pre-initiation complex (POL-TP-DBP-NFIA-POU2F1). Preterminal protein is used to replicate viral genome, upon genomic encapsidation it is processed first into iTP and finally into TP by adenovirus protease.

The protein localises to the host nucleus matrix. Protein covalently bound to the viral DNA that acts as a primer for viral genomic replication by DNA strand displacement. Assembles on the viral origin of replication in an initiation complex with viral polymerase, DBP, host NFIA and host POU2F1/OCT1. During initiation, the polymerase covalently couples the first dCTP with Ser-580 of pTP. The terminal protein stimulates the template activity over 20 fold compared to protein-free templates. Neo-synthesized viral genomes are linked to two preterminal proteins, one for each 5' end. These new genomes are encapsidated in the nucleus, and during capsid maturation by viral protease, preterminal protein is first cleaved into intermediary (iTP), then into mature TP. May play a role in host nuclear matrix localization of genomic DNA. In Human adenovirus B serotype 7 (HAdV-7), this protein is Preterminal protein.